Consider the following 94-residue polypeptide: Co-chaperonin GroES (94 aa).

The protein belongs to the GroES chaperonin family. As to quaternary structure, heptamer of 7 subunits arranged in a ring. Interacts with the chaperonin GroEL.

Its subcellular location is the cytoplasm. In terms of biological role, together with the chaperonin GroEL, plays an essential role in assisting protein folding. The GroEL-GroES system forms a nano-cage that allows encapsulation of the non-native substrate proteins and provides a physical environment optimized to promote and accelerate protein folding. GroES binds to the apical surface of the GroEL ring, thereby capping the opening of the GroEL channel. The polypeptide is Co-chaperonin GroES (Clostridium botulinum (strain Alaska E43 / Type E3)).